The following is a 118-amino-acid chain: MPRPPKWRWVRSEPNVTYFKPVGIPLSMLEEVILTVEELEAIRLKDLEGLEQEECADMMKVSRPTFFRIITSARQKIADALVNGKAIRVEGGNYKVYGEDMRGHGGMRHRHGWYNEED.

Belongs to the UPF0251 family.

In Caldanaerobacter subterraneus subsp. tengcongensis (strain DSM 15242 / JCM 11007 / NBRC 100824 / MB4) (Thermoanaerobacter tengcongensis), this protein is UPF0251 protein TTE1845.